Reading from the N-terminus, the 100-residue chain is Large ribosomal subunit protein uL23 (100 aa).

This sequence belongs to the universal ribosomal protein uL23 family. As to quaternary structure, part of the 50S ribosomal subunit. Contacts protein L29, and trigger factor when it is bound to the ribosome.

Its function is as follows. One of the early assembly proteins it binds 23S rRNA. One of the proteins that surrounds the polypeptide exit tunnel on the outside of the ribosome. Forms the main docking site for trigger factor binding to the ribosome. The polypeptide is Large ribosomal subunit protein uL23 (Edwardsiella ictaluri (strain 93-146)).